The sequence spans 493 residues: Glutamyl-tRNA(Gln) amidotransferase subunit A (493 aa).

Residues K78 and S158 each act as charge relay system in the active site. S182 serves as the catalytic Acyl-ester intermediate.

It belongs to the amidase family. GatA subfamily. Heterotrimer of A, B and C subunits.

It catalyses the reaction L-glutamyl-tRNA(Gln) + L-glutamine + ATP + H2O = L-glutaminyl-tRNA(Gln) + L-glutamate + ADP + phosphate + H(+). In terms of biological role, allows the formation of correctly charged Gln-tRNA(Gln) through the transamidation of misacylated Glu-tRNA(Gln) in organisms which lack glutaminyl-tRNA synthetase. The reaction takes place in the presence of glutamine and ATP through an activated gamma-phospho-Glu-tRNA(Gln). The protein is Glutamyl-tRNA(Gln) amidotransferase subunit A of Rickettsia africae (strain ESF-5).